Reading from the N-terminus, the 112-residue chain is Nitrogen regulatory protein P-II 1 (112 aa).

O-UMP-tyrosine is present on tyrosine 51.

The protein belongs to the P(II) protein family. Homotrimer. Post-translationally, uridylylated/deuridylylated by GlnD.

P-II indirectly controls the transcription of the glutamine synthetase gene (GlnA). P-II prevents NR-II-catalyzed conversion of NR-I to NR-I-phosphate, the transcriptional activator of GlnA. When P-II is uridylylated to P-II-UMP, these events are reversed. When the ratio of Gln to 2-ketoglutarate decreases, P-II is uridylylated to P-II-UMP, which causes the deadenylation of glutamine synthetase by GlnE, so activating the enzyme. The sequence is that of Nitrogen regulatory protein P-II 1 (glnB) from Escherichia coli O157:H7.